The sequence spans 216 residues: ATP phosphoribosyltransferase (216 aa).

The protein belongs to the ATP phosphoribosyltransferase family. Short subfamily. As to quaternary structure, heteromultimer composed of HisG and HisZ subunits.

The protein resides in the cytoplasm. It carries out the reaction 1-(5-phospho-beta-D-ribosyl)-ATP + diphosphate = 5-phospho-alpha-D-ribose 1-diphosphate + ATP. Its pathway is amino-acid biosynthesis; L-histidine biosynthesis; L-histidine from 5-phospho-alpha-D-ribose 1-diphosphate: step 1/9. Catalyzes the condensation of ATP and 5-phosphoribose 1-diphosphate to form N'-(5'-phosphoribosyl)-ATP (PR-ATP). Has a crucial role in the pathway because the rate of histidine biosynthesis seems to be controlled primarily by regulation of HisG enzymatic activity. This is ATP phosphoribosyltransferase from Rubrobacter xylanophilus (strain DSM 9941 / JCM 11954 / NBRC 16129 / PRD-1).